We begin with the raw amino-acid sequence, 276 residues long: Ribosomal RNA small subunit methyltransferase A (276 aa).

Positions 27, 29, 54, 75, 101, and 123 each coordinate S-adenosyl-L-methionine.

Belongs to the class I-like SAM-binding methyltransferase superfamily. rRNA adenine N(6)-methyltransferase family. RsmA subfamily.

It is found in the cytoplasm. The enzyme catalyses adenosine(1518)/adenosine(1519) in 16S rRNA + 4 S-adenosyl-L-methionine = N(6)-dimethyladenosine(1518)/N(6)-dimethyladenosine(1519) in 16S rRNA + 4 S-adenosyl-L-homocysteine + 4 H(+). Its function is as follows. Specifically dimethylates two adjacent adenosines (A1518 and A1519) in the loop of a conserved hairpin near the 3'-end of 16S rRNA in the 30S particle. May play a critical role in biogenesis of 30S subunits. The polypeptide is Ribosomal RNA small subunit methyltransferase A (Bartonella bacilliformis (strain ATCC 35685 / KC583 / Herrer 020/F12,63)).